The sequence spans 485 residues: MKEFRVRFAPSPTGPIHIGNMRTALFNYLFSRSEGATFVLRIEDTDLERSSKGFEELIFKELKWLGIEWDEGPDKPGPYGPYRQSERLEIYHRFAQKLIEEKKAYRCYCTPEELEEDRKKAIERGEIPRYSGRCRYLTKEQEETFIREGRKPVIRFMVPDDEVIEFEDMIKGKITIKSDTLGGDMVIIKSDGMPTYNFAVVIDDALMKITHVIRGEDHIYNTPKQILIYKALGFEIPKFAHVPLILGPDRTKLSKRHGHTYIGQYRELGYLPEAMFNFLSLLSWYPEDNVELMSKEEIIRKFNFKRIHKSNPVFDIEKLNWMNQQYIQKSPVERIVDLAIPHLKKAGYIDEIDELRYNWLKDVISLYKDGLSYVAQIVDMAKTFFVEEVDYTGEMIEFLKSPNSIKVLEAFKGYLKDKSEITEDDVREWMKKAQKELGVKGKEFFMPIRIAVTGEEHGPELVKVLALLGKNRVVKRLDRVLNLIE.

The 'HIGH' region motif lies at 10-20; the sequence is PSPTGPIHIGN. The 'KMSKS' region motif lies at 252-256; the sequence is KLSKR. Residue K255 coordinates ATP.

The protein belongs to the class-I aminoacyl-tRNA synthetase family. Glutamate--tRNA ligase type 1 subfamily. Monomer.

The protein resides in the cytoplasm. It catalyses the reaction tRNA(Glu) + L-glutamate + ATP = L-glutamyl-tRNA(Glu) + AMP + diphosphate. Its function is as follows. Catalyzes the attachment of glutamate to tRNA(Glu) in a two-step reaction: glutamate is first activated by ATP to form Glu-AMP and then transferred to the acceptor end of tRNA(Glu). In Caldanaerobacter subterraneus subsp. tengcongensis (strain DSM 15242 / JCM 11007 / NBRC 100824 / MB4) (Thermoanaerobacter tengcongensis), this protein is Glutamate--tRNA ligase 2.